We begin with the raw amino-acid sequence, 158 residues long: MTNGNGAPPEAVAAPQLNVLAQYTKDLSFENPNAPASLAQQQQQPAINIQINVGANNLAENEYEVTLSVEGKAESGSTVLFSFELAYAGVFRIVNVPQENLHPLIMIECPRLLFPFAREIIASAVRDGGFPPLMLDPVDFVGLYRQNMERQAQQGQPS.

This sequence belongs to the SecB family. In terms of assembly, homotetramer, a dimer of dimers. One homotetramer interacts with 1 SecA dimer.

It is found in the cytoplasm. In terms of biological role, one of the proteins required for the normal export of preproteins out of the cell cytoplasm. It is a molecular chaperone that binds to a subset of precursor proteins, maintaining them in a translocation-competent state. It also specifically binds to its receptor SecA. The polypeptide is Protein-export protein SecB (Rhodopseudomonas palustris (strain BisB5)).